Reading from the N-terminus, the 327-residue chain is Zinc transport protein ZntB (327 aa).

Residues 1 to 273 lie on the Cytoplasmic side of the membrane; that stretch reads MEAIKGSDVN…ARRTYTMSLM (273 aa). A helical transmembrane segment spans residues 274-294; sequence AMVFLPSTFLTGLFGVNLGGI. The Periplasmic portion of the chain corresponds to 295-300; the sequence is PGGGWQ. Residues 301-321 traverse the membrane as a helical segment; the sequence is FGFSIFCILLVVLIGGVALWL. Topologically, residues 322–327 are cytoplasmic; it reads HRSKWL.

Belongs to the CorA metal ion transporter (MIT) (TC 1.A.35) family.

The protein resides in the cell inner membrane. It carries out the reaction Zn(2+)(out) + H(+)(out) = Zn(2+)(in) + H(+)(in). Functionally, zinc transporter. Acts as a Zn(2+):proton symporter, which likely mediates zinc ion uptake. This Escherichia coli O139:H28 (strain E24377A / ETEC) protein is Zinc transport protein ZntB.